The following is a 417-amino-acid chain: Phosphoglycerate kinase, cytosolic (417 aa).

(2R)-3-phosphoglycerate is bound by residues V23, D24, F25, N26, R39, S61, H62, G64, R65, R132, H168, and R169. Residues G214 and A215 each coordinate ADP. G214 contributes to the CDP binding site. Positions 215 and 216 each coordinate AMP. A215 lines the ATP pocket. A215 serves as a coordination point for Mg(2+). Residue K216 participates in (2R)-3-phosphoglycerate binding. D219 serves as a coordination point for CDP. D219 serves as a coordination point for Mg(2+). Residues K220 and G238 each contribute to the ADP site. K220 is a binding site for AMP. K220 contributes to the ATP binding site. G238 contacts CDP. Positions 239 and 311 each coordinate AMP. ATP is bound by residues A239 and A311. ADP contacts are provided by A311 and N335. Positions 336 and 341 each coordinate CDP. F341, E342, D374, and T375 together coordinate ADP. AMP is bound at residue E342. Residues E342, D374, and T375 each contribute to the ATP site. D374 is a binding site for Mg(2+).

It belongs to the phosphoglycerate kinase family. Monomer. Requires Mg(2+) as cofactor.

The protein localises to the cytoplasm. The catalysed reaction is (2R)-3-phosphoglycerate + ATP = (2R)-3-phospho-glyceroyl phosphate + ADP. It participates in carbohydrate degradation; glycolysis; pyruvate from D-glyceraldehyde 3-phosphate: step 2/5. The chain is Phosphoglycerate kinase, cytosolic (PGKB) from Leishmania mexicana.